A 176-amino-acid chain; its full sequence is Ribosome maturation factor RimM (176 aa).

A PRC barrel domain is found at 99–176 (EDEYYWSDLV…RMVVDWERDF (78 aa)).

The protein belongs to the RimM family. As to quaternary structure, binds ribosomal protein uS19.

Its subcellular location is the cytoplasm. Functionally, an accessory protein needed during the final step in the assembly of 30S ribosomal subunit, possibly for assembly of the head region. Essential for efficient processing of 16S rRNA. May be needed both before and after RbfA during the maturation of 16S rRNA. It has affinity for free ribosomal 30S subunits but not for 70S ribosomes. The polypeptide is Ribosome maturation factor RimM (Psychrobacter sp. (strain PRwf-1)).